Here is a 597-residue protein sequence, read N- to C-terminus: Exochitinase 1 (597 aa).

Residues 1–29 (MDRFRPLAVLIAAALTLSGTTALSSAARA) constitute a signal peptide (or 32). The Fibronectin type-III domain occupies 172–253 (PPTGLRTGSV…ATVTATTAPG (82 aa)). Residues 264–597 (HALVGYLHAS…FQRTFDGYFG (334 aa)) enclose the GH18 domain. Catalysis depends on glutamate 384, which acts as the Proton donor.

Belongs to the glycosyl hydrolase 18 family. Chitinase class II subfamily. Post-translationally, the N-terminus is blocked.

The catalysed reaction is Random endo-hydrolysis of N-acetyl-beta-D-glucosaminide (1-&gt;4)-beta-linkages in chitin and chitodextrins.. Its activity is regulated as follows. Inhibited by the pseudosugar allosamidin A. In terms of biological role, exochitinase that generates exclusively chitobiose from chitotetraose, chitohexaose, and colloidal high-molecular mass chitin. The protein is Exochitinase 1 (chi01) of Streptomyces olivaceoviridis (Streptomyces corchorusii).